An 81-amino-acid polypeptide reads, in one-letter code: Costars family protein ABRACL (81 aa).

The protein belongs to the costars family.

This Xenopus tropicalis (Western clawed frog) protein is Costars family protein ABRACL (abracl).